The chain runs to 302 residues: Nucleotide-binding protein Rsph17029_0317 (302 aa).

Position 15-22 (15-22 (GPSGAGRT)) interacts with ATP. 62–65 (DVRN) is a binding site for GTP.

The protein belongs to the RapZ-like family.

Its function is as follows. Displays ATPase and GTPase activities. The polypeptide is Nucleotide-binding protein Rsph17029_0317 (Cereibacter sphaeroides (strain ATCC 17029 / ATH 2.4.9) (Rhodobacter sphaeroides)).